We begin with the raw amino-acid sequence, 137 residues long: ATP synthase epsilon chain, chloroplastic (137 aa).

The protein belongs to the ATPase epsilon chain family. In terms of assembly, F-type ATPases have 2 components, CF(1) - the catalytic core - and CF(0) - the membrane proton channel. CF(1) has five subunits: alpha(3), beta(3), gamma(1), delta(1), epsilon(1). CF(0) has three main subunits: a, b and c.

Its subcellular location is the plastid. The protein localises to the chloroplast thylakoid membrane. In terms of biological role, produces ATP from ADP in the presence of a proton gradient across the membrane. The sequence is that of ATP synthase epsilon chain, chloroplastic from Pinus thunbergii (Japanese black pine).